The primary structure comprises 793 residues: Probable alpha-fucosidase A (793 aa).

Positions 1-20 (MLISGSSAALCALALPFAAA) are cleaved as a signal peptide. Residues Asn30, Asn83, Asn100, Asn104, Asn123, Asn179, Asn199, Asn234, Asn323, Asn597, Asn622, Asn660, and Asn757 are each glycosylated (N-linked (GlcNAc...) asparagine).

It belongs to the glycosyl hydrolase 95 family.

The protein localises to the secreted. It catalyses the reaction an alpha-L-fucoside + H2O = L-fucose + an alcohol. In terms of biological role, alpha-fucosidase involved in degradation of fucosylated xyloglucans. Hydrolyzes alpha-1,2-linked fucose. The chain is Probable alpha-fucosidase A (afcA) from Aspergillus niger (strain ATCC MYA-4892 / CBS 513.88 / FGSC A1513).